The chain runs to 462 residues: Siroheme synthase (462 aa).

Residues 1–201 (MQFLPLFHKL…GKPEEGERLL (201 aa)) form a precorrin-2 dehydrogenase /sirohydrochlorin ferrochelatase region. NAD(+) is bound by residues 22-23 (EV) and 43-44 (PE). Ser-126 carries the phosphoserine modification. Positions 214-462 (GEVYLVGAGP…AWFEGAQGSL (249 aa)) are uroporphyrinogen-III C-methyltransferase. Position 223 (Pro-223) interacts with S-adenosyl-L-methionine. Asp-246 (proton acceptor) is an active-site residue. Catalysis depends on Lys-268, which acts as the Proton donor. S-adenosyl-L-methionine contacts are provided by residues 299–301 (GGD), Ile-304, 329–330 (TA), Met-381, and Gly-410.

This sequence in the N-terminal section; belongs to the precorrin-2 dehydrogenase / sirohydrochlorin ferrochelatase family. The protein in the C-terminal section; belongs to the precorrin methyltransferase family.

The enzyme catalyses uroporphyrinogen III + 2 S-adenosyl-L-methionine = precorrin-2 + 2 S-adenosyl-L-homocysteine + H(+). It catalyses the reaction precorrin-2 + NAD(+) = sirohydrochlorin + NADH + 2 H(+). The catalysed reaction is siroheme + 2 H(+) = sirohydrochlorin + Fe(2+). Its pathway is cofactor biosynthesis; adenosylcobalamin biosynthesis; precorrin-2 from uroporphyrinogen III: step 1/1. It functions in the pathway cofactor biosynthesis; adenosylcobalamin biosynthesis; sirohydrochlorin from precorrin-2: step 1/1. The protein operates within porphyrin-containing compound metabolism; siroheme biosynthesis; precorrin-2 from uroporphyrinogen III: step 1/1. It participates in porphyrin-containing compound metabolism; siroheme biosynthesis; siroheme from sirohydrochlorin: step 1/1. Its pathway is porphyrin-containing compound metabolism; siroheme biosynthesis; sirohydrochlorin from precorrin-2: step 1/1. Multifunctional enzyme that catalyzes the SAM-dependent methylations of uroporphyrinogen III at position C-2 and C-7 to form precorrin-2 via precorrin-1. Then it catalyzes the NAD-dependent ring dehydrogenation of precorrin-2 to yield sirohydrochlorin. Finally, it catalyzes the ferrochelation of sirohydrochlorin to yield siroheme. This chain is Siroheme synthase, found in Ectopseudomonas mendocina (strain ymp) (Pseudomonas mendocina).